Reading from the N-terminus, the 499-residue chain is NAD(P)H-quinone oxidoreductase chain 4, chloroplastic (499 aa).

The next 14 helical transmembrane spans lie at 4-24 (LPWL…IPLF), 31-51 (MIRW…TYIF), 87-107 (IGLI…AWPV), 113-130 (LLHF…GLFA), 134-154 (ILLF…LLSM), 167-187 (FLLY…SMGL), 211-231 (ILLY…FPLH), 242-262 (HYST…YGLI), 274-294 (SLFS…AALT), 305-325 (IAYS…SMTY), 330-350 (GAIL…FLVG), 386-406 (LALP…GVIT), 416-436 (IIIT…LLSM), and 462-482 (LFIL…PDLV).

This sequence belongs to the complex I subunit 4 family.

Its subcellular location is the plastid. The protein localises to the chloroplast thylakoid membrane. It catalyses the reaction a plastoquinone + NADH + (n+1) H(+)(in) = a plastoquinol + NAD(+) + n H(+)(out). The catalysed reaction is a plastoquinone + NADPH + (n+1) H(+)(in) = a plastoquinol + NADP(+) + n H(+)(out). The sequence is that of NAD(P)H-quinone oxidoreductase chain 4, chloroplastic from Cryptomeria japonica (Japanese cedar).